Consider the following 152-residue polypeptide: Xanthine-guanine phosphoribosyltransferase (152 aa).

5-phospho-alpha-D-ribose 1-diphosphate contacts are provided by residues 37–38 (RG), Arg-69, and 88–96 (DDLVDTGGT). Residue Arg-69 participates in GMP binding. Mg(2+) is bound at residue Asp-89. Guanine is bound by residues Asp-92 and Ile-135. The xanthine site is built by Asp-92 and Ile-135. GMP-binding positions include 92 to 96 (DTGGT) and 134 to 135 (WI).

Belongs to the purine/pyrimidine phosphoribosyltransferase family. XGPT subfamily. In terms of assembly, homotetramer. Mg(2+) serves as cofactor.

It localises to the cell inner membrane. It carries out the reaction GMP + diphosphate = guanine + 5-phospho-alpha-D-ribose 1-diphosphate. It catalyses the reaction XMP + diphosphate = xanthine + 5-phospho-alpha-D-ribose 1-diphosphate. The enzyme catalyses IMP + diphosphate = hypoxanthine + 5-phospho-alpha-D-ribose 1-diphosphate. The protein operates within purine metabolism; GMP biosynthesis via salvage pathway; GMP from guanine: step 1/1. It functions in the pathway purine metabolism; XMP biosynthesis via salvage pathway; XMP from xanthine: step 1/1. In terms of biological role, purine salvage pathway enzyme that catalyzes the transfer of the ribosyl-5-phosphate group from 5-phospho-alpha-D-ribose 1-diphosphate (PRPP) to the N9 position of the 6-oxopurines guanine and xanthine to form the corresponding ribonucleotides GMP (guanosine 5'-monophosphate) and XMP (xanthosine 5'-monophosphate), with the release of PPi. To a lesser extent, also acts on hypoxanthine. This Escherichia fergusonii (strain ATCC 35469 / DSM 13698 / CCUG 18766 / IAM 14443 / JCM 21226 / LMG 7866 / NBRC 102419 / NCTC 12128 / CDC 0568-73) protein is Xanthine-guanine phosphoribosyltransferase.